The chain runs to 189 residues: Peptidyl-tRNA hydrolase (189 aa).

Tyr15 is a tRNA binding site. Residue His20 is the Proton acceptor of the active site. The tRNA site is built by Phe66, Asn68, and Asn114.

Belongs to the PTH family. In terms of assembly, monomer.

The protein localises to the cytoplasm. It catalyses the reaction an N-acyl-L-alpha-aminoacyl-tRNA + H2O = an N-acyl-L-amino acid + a tRNA + H(+). Functionally, hydrolyzes ribosome-free peptidyl-tRNAs (with 1 or more amino acids incorporated), which drop off the ribosome during protein synthesis, or as a result of ribosome stalling. Its function is as follows. Catalyzes the release of premature peptidyl moieties from peptidyl-tRNA molecules trapped in stalled 50S ribosomal subunits, and thus maintains levels of free tRNAs and 50S ribosomes. The protein is Peptidyl-tRNA hydrolase of Streptococcus suis (strain 98HAH33).